Reading from the N-terminus, the 359-residue chain is MCEVFRRLPGTAPGSSPPAPATHRLRLLGRELRVRRFMIFCRFWAKMATNDAVLKRLEQKGAEADQIIEYLKQQVALLKEKAVLQATLREEKKLRVENAKLKKEIEELKQELIQAEIQNGVKQIPVPVQSDTPVQASSAVSTSVIQSTSVSTISCSIKEHSKGGGEEKKVKEKTDKKGEKKEKKLQSAAPSADSKPVDVSRLDLRIGRIVTVKKHPDADSLYVEEVDVGEAAPRTVISGLVNHVPLDQMQNRMVVLLCNLKPAKMRGILSQAMVMCASSPEKVEILAPPNGSVPGDRITFDAFPGEPDKELNPKKKIWEQIQPDLHTNAECVATYKGSPFEVKGKGVCRAQTMANSGIK.

Residues 52–92 (AVLKRLEQKGAEADQIIEYLKQQVALLKEKAVLQATLREEK) form a required for fibroblast proliferation region. Positions 100 to 241 (KLKKEIEELK…APRTVISGLV (142 aa)) are interaction with HSP90B1. Positions 149–163 (SVSTISCSIKEHSKG) are required for endothelial cell death. The tract at residues 156 to 196 (SIKEHSKGGGEEKKVKEKTDKKGEKKEKKLQSAAPSADSKP) is disordered. The span at 157 to 185 (IKEHSKGGGEEKKVKEKTDKKGEKKEKKL) shows a compositional bias: basic and acidic residues. The required for endothelial cell migration stretch occupies residues 163-239 (GGGEEKKVKE…EAAPRTVISG (77 aa)). Residue Lys184 forms a Glycyl lysine isopeptide (Lys-Gly) (interchain with G-Cter in SUMO1) linkage. Position 187 is a phosphoserine (Ser187). Residues 198–299 (DVSRLDLRIG…NGSVPGDRIT (102 aa)) form the tRNA-binding domain. The residue at position 316 (Lys316) is an N6-succinyllysine.

In terms of assembly, homodimer. Part of the multisynthetase complex (MSC), a multisubunit complex that groups tRNA ligases for Arg (RARS1), Asp (DARS1), Gln (QARS1), Ile (IARS1), Leu (LARS1), Lys (KARS1), Met (MARS1) the bifunctional ligase for Glu and Pro (EPRS1) and the auxiliary subunits AIMP1/p43, AIMP2/p38 and EEF1E1/p18. Interacts (via N-terminus) with RARS1 (via N-terminus). Part of a complex composed of RARS1, QARS1 and AIMP1. Interacts (via C-terminus) with SMURF2. Interacts (via N-terminus) with HSP90B1/gp96 (via C-terminus). Interacts with PSMA7. Interacts with TARS3. Post-translationally, cleaved by caspase-7 in response to apoptosis to produce EMAP-II.

It localises to the nucleus. Its subcellular location is the cytoplasm. It is found in the cytosol. The protein resides in the secreted. The protein localises to the endoplasmic reticulum. It localises to the golgi apparatus. In terms of biological role, non-catalytic component of the multisynthase complex. Stimulates the catalytic activity of cytoplasmic arginyl-tRNA synthase. Binds tRNA. Possesses inflammatory cytokine activity. Negatively regulates TGF-beta signaling through stabilization of SMURF2 by binding to SMURF2 and inhibiting its SMAD7-mediated degradation. Involved in glucose homeostasis through induction of glucagon secretion at low glucose levels. Promotes dermal fibroblast proliferation and wound repair. Regulates KDELR1-mediated retention of HSP90B1/gp96 in the endoplasmic reticulum. Plays a role in angiogenesis by inducing endothelial cell migration at low concentrations and endothelian cell apoptosis at high concentrations. Induces maturation of dendritic cells and monocyte cell adhesion. This is Aminoacyl tRNA synthase complex-interacting multifunctional protein 1 (AIMP1) from Cricetulus griseus (Chinese hamster).